A 131-amino-acid chain; its full sequence is Holo-[acyl-carrier-protein] synthase (131 aa).

Mg(2+) is bound by residues aspartate 8 and glutamate 59.

This sequence belongs to the P-Pant transferase superfamily. AcpS family. Requires Mg(2+) as cofactor.

The protein localises to the cytoplasm. The catalysed reaction is apo-[ACP] + CoA = holo-[ACP] + adenosine 3',5'-bisphosphate + H(+). Functionally, transfers the 4'-phosphopantetheine moiety from coenzyme A to a Ser of acyl-carrier-protein. In Orientia tsutsugamushi (strain Ikeda) (Rickettsia tsutsugamushi), this protein is Holo-[acyl-carrier-protein] synthase.